The chain runs to 539 residues: Protoporphyrinogen oxidase (539 aa).

FAD contacts are provided by residues 18–23 (GGGVSG), 43–44 (ES), W51, 70–73 (GPRT), V300, and 521–523 (PGV).

This sequence belongs to the protoporphyrinogen/coproporphyrinogen oxidase family. Protoporphyrinogen oxidase subfamily. Requires FAD as cofactor.

Its subcellular location is the mitochondrion inner membrane. It carries out the reaction protoporphyrinogen IX + 3 O2 = protoporphyrin IX + 3 H2O2. It functions in the pathway porphyrin-containing compound metabolism; protoporphyrin-IX biosynthesis; protoporphyrin-IX from protoporphyrinogen-IX: step 1/1. Functionally, catalyzes the 6-electron oxidation of protoporphyrinogen-IX to form protoporphyrin-IX. In Saccharomyces cerevisiae (strain ATCC 204508 / S288c) (Baker's yeast), this protein is Protoporphyrinogen oxidase.